A 132-amino-acid polypeptide reads, in one-letter code: Small ribosomal subunit protein bS6 (132 aa).

The tract at residues 96 to 132 (HAEGPSIQMQKRDERERGDRGDRSDRGDRGDRGGFRR) is disordered. Residues 105–132 (QKRDERERGDRGDRSDRGDRGDRGGFRR) show a composition bias toward basic and acidic residues.

It belongs to the bacterial ribosomal protein bS6 family.

Binds together with bS18 to 16S ribosomal RNA. This chain is Small ribosomal subunit protein bS6, found in Cereibacter sphaeroides (strain ATCC 17023 / DSM 158 / JCM 6121 / CCUG 31486 / LMG 2827 / NBRC 12203 / NCIMB 8253 / ATH 2.4.1.) (Rhodobacter sphaeroides).